The sequence spans 183 residues: Nucleoside diphosphate kinase (183 aa).

K11 is a binding site for ATP. An insert region spans residues 56–88 (EWLRSAGQKLLKAYQELGIDPRAKIGTDDPVEV). Residues R120, T126, R137, and N157 each coordinate ATP. H160 (pros-phosphohistidine intermediate) is an active-site residue.

This sequence belongs to the NDK family. It depends on Mg(2+) as a cofactor.

It localises to the cytoplasm. The enzyme catalyses a 2'-deoxyribonucleoside 5'-diphosphate + ATP = a 2'-deoxyribonucleoside 5'-triphosphate + ADP. It catalyses the reaction a ribonucleoside 5'-diphosphate + ATP = a ribonucleoside 5'-triphosphate + ADP. Functionally, major role in the synthesis of nucleoside triphosphates other than ATP. The ATP gamma phosphate is transferred to the NDP beta phosphate via a ping-pong mechanism, using a phosphorylated active-site intermediate. The chain is Nucleoside diphosphate kinase (ndk) from Pyrobaculum aerophilum (strain ATCC 51768 / DSM 7523 / JCM 9630 / CIP 104966 / NBRC 100827 / IM2).